Consider the following 152-residue polypeptide: Snaclec coagulation factor IX/factor X-binding protein subunit A (152 aa).

Positions 1-23 (MGRFIFLSFGLLVVFLSLSGTGA) are cleaved as a signal peptide. Cystine bridges form between Cys25–Cys36, Cys53–Cys150, and Cys125–Cys142. The C-type lectin domain occupies 32–151 (YEGHCYNIFH…CGERNPFVCE (120 aa)). Ca(2+)-binding residues include Ser64, Glu66, and Glu70. Glu151 provides a ligand contact to Ca(2+).

The protein belongs to the snaclec family. Heterodimer of subunits A and B; disulfide-linked. Expressed by the venom gland.

The protein localises to the secreted. Its function is as follows. Anticoagulant protein which binds to the gamma-carboxyglutamic acid-domain regions of factors IX (F9) and factor X (F10) in the presence of calcium with a 1 to 1 stoichiometry. The sequence is that of Snaclec coagulation factor IX/factor X-binding protein subunit A from Gloydius halys (Chinese water mocassin).